The sequence spans 327 residues: L-lactate dehydrogenase (327 aa).

Residues Val18, Asp39, Arg44, Tyr69, and 83 to 84 (GL) contribute to the NAD(+) site. Substrate is bound by residues Gln86, Arg92, and 124-127 (NPVD). NAD(+)-binding positions include 122–124 (AAN) and Ser147. 152 to 155 (DSAR) is a binding site for substrate. Beta-D-fructose 1,6-bisphosphate contacts are provided by Arg157 and His172. His179 serves as the catalytic Proton acceptor. Tyr224 bears the Phosphotyrosine mark. Thr233 contributes to the substrate binding site.

The protein belongs to the LDH/MDH superfamily. LDH family. Homotetramer.

It localises to the cytoplasm. It catalyses the reaction (S)-lactate + NAD(+) = pyruvate + NADH + H(+). It functions in the pathway fermentation; pyruvate fermentation to lactate; (S)-lactate from pyruvate: step 1/1. Its activity is regulated as follows. Allosterically activated by fructose 1,6-bisphosphate (FBP). Functionally, catalyzes the conversion of lactate to pyruvate. The sequence is that of L-lactate dehydrogenase from Streptococcus suis (strain 98HAH33).